A 255-amino-acid chain; its full sequence is 2-succinyl-6-hydroxy-2,4-cyclohexadiene-1-carboxylate synthase (255 aa).

The protein belongs to the AB hydrolase superfamily. MenH family. As to quaternary structure, monomer.

The enzyme catalyses 5-enolpyruvoyl-6-hydroxy-2-succinyl-cyclohex-3-ene-1-carboxylate = (1R,6R)-6-hydroxy-2-succinyl-cyclohexa-2,4-diene-1-carboxylate + pyruvate. It functions in the pathway quinol/quinone metabolism; 1,4-dihydroxy-2-naphthoate biosynthesis; 1,4-dihydroxy-2-naphthoate from chorismate: step 3/7. The protein operates within quinol/quinone metabolism; menaquinone biosynthesis. Catalyzes a proton abstraction reaction that results in 2,5-elimination of pyruvate from 2-succinyl-5-enolpyruvyl-6-hydroxy-3-cyclohexene-1-carboxylate (SEPHCHC) and the formation of 2-succinyl-6-hydroxy-2,4-cyclohexadiene-1-carboxylate (SHCHC). This Serratia proteamaculans (strain 568) protein is 2-succinyl-6-hydroxy-2,4-cyclohexadiene-1-carboxylate synthase.